A 440-amino-acid chain; its full sequence is C-terminal-binding protein 1 (440 aa).

NAD(+) contacts are provided by residues Ser-100, 180–185 (IGLGRV), Asp-204, 237–243 (CGLNEHN), 264–266 (TAR), and Asp-290. Arg-266 is a catalytic residue. Glu-295 is an active-site residue. His-315 (proton donor) is an active-site residue. 315 to 318 (HAAW) is an NAD(+) binding site. The interval 409-440 (HAHPAVAHPPHAPSPGQTIKPEADRDHPSDQL) is disordered. Over residues 429–440 (PEADRDHPSDQL) the composition is skewed to basic and acidic residues.

The protein belongs to the D-isomer specific 2-hydroxyacid dehydrogenase family. NAD(+) is required as a cofactor.

The protein localises to the nucleus. Functionally, corepressor targeting diverse transcription regulators. Has dehydrogenase activity. The polypeptide is C-terminal-binding protein 1 (ctbp1) (Xenopus laevis (African clawed frog)).